Here is a 192-residue protein sequence, read N- to C-terminus: Erythropoietin (192 aa).

The signal sequence occupies residues 1-27 (MGVHECPAWLWLLLSLVSLPLGLPVPG). Cystine bridges form between Cys-34–Cys-187 and Cys-56–Cys-60. N-linked (GlcNAc...) asparagine glycosylation is present at Asn-51. N-linked (GlcNAc...) asparagine glycans are attached at residues Asn-65 and Asn-110. A glycan (O-linked (GalNAc...) serine) is linked at Ser-152.

This sequence belongs to the EPO/TPO family. Produced by kidney or liver of adult mammals and by liver of fetal or neonatal mammals.

The protein resides in the secreted. Hormone involved in the regulation of erythrocyte proliferation and differentiation and the maintenance of a physiological level of circulating erythrocyte mass. Binds to EPOR leading to EPOR dimerization and JAK2 activation thereby activating specific downstream effectors, including STAT1 and STAT3. The sequence is that of Erythropoietin (EPO) from Macaca fascicularis (Crab-eating macaque).